The following is a 556-amino-acid chain: 2-succinyl-5-enolpyruvyl-6-hydroxy-3-cyclohexene-1-carboxylate synthase (556 aa).

It belongs to the TPP enzyme family. MenD subfamily. Homodimer. Mg(2+) serves as cofactor. Mn(2+) is required as a cofactor. Requires thiamine diphosphate as cofactor.

The catalysed reaction is isochorismate + 2-oxoglutarate + H(+) = 5-enolpyruvoyl-6-hydroxy-2-succinyl-cyclohex-3-ene-1-carboxylate + CO2. It functions in the pathway quinol/quinone metabolism; 1,4-dihydroxy-2-naphthoate biosynthesis; 1,4-dihydroxy-2-naphthoate from chorismate: step 2/7. The protein operates within quinol/quinone metabolism; menaquinone biosynthesis. Functionally, catalyzes the thiamine diphosphate-dependent decarboxylation of 2-oxoglutarate and the subsequent addition of the resulting succinic semialdehyde-thiamine pyrophosphate anion to isochorismate to yield 2-succinyl-5-enolpyruvyl-6-hydroxy-3-cyclohexene-1-carboxylate (SEPHCHC). This is 2-succinyl-5-enolpyruvyl-6-hydroxy-3-cyclohexene-1-carboxylate synthase from Citrobacter koseri (strain ATCC BAA-895 / CDC 4225-83 / SGSC4696).